Here is a 115-residue protein sequence, read N- to C-terminus: Large ribosomal subunit protein bL20c (115 aa).

It belongs to the bacterial ribosomal protein bL20 family.

It is found in the plastid. The protein resides in the chloroplast. Its function is as follows. Binds directly to 23S ribosomal RNA and is necessary for the in vitro assembly process of the 50S ribosomal subunit. It is not involved in the protein synthesizing functions of that subunit. This Angiopteris evecta (Mule's foot fern) protein is Large ribosomal subunit protein bL20c.